Consider the following 441-residue polypeptide: Aminopeptidase C (441 aa).

Residues Cys70, His361, and Asn382 contribute to the active site.

It belongs to the peptidase C1 family.

The catalysed reaction is Inactivates bleomycin B2 (a cytotoxic glycometallopeptide) by hydrolysis of a carboxyamide bond of beta-aminoalanine, but also shows general aminopeptidase activity. The specificity varies somewhat with source, but amino acid arylamides of Met, Leu and Ala are preferred.. The chain is Aminopeptidase C (pepC) from Listeria monocytogenes serovar 1/2a (strain ATCC BAA-679 / EGD-e).